The chain runs to 711 residues: Dixin (711 aa).

Leucine 2 is lipidated: N-myristoyl glycine. Residue valine 13 is modified to Phosphoserine. Positions 20-153 (EQQLQAYVAW…LVLALAAHFK (134 aa)) constitute a Calponin-homology (CH) domain. Residues 153–326 (KPGSSRTVSQ…LEKEMEEAKK (174 aa)) are actin-binding. The residue at position 212 (serine 212) is a Phosphoserine. Disordered stretches follow at residues 233–258 (GQQK…AKSE), 271–298 (VIIP…PGSR), and 584–623 (TQKK…SSPA). The span at 237–254 (SPSESSCSSLTSPSPIHS) shows a compositional bias: low complexity. Residue serine 257 is modified to Phosphoserine. Positions 278–295 (IENRTDEPDSPSSRDWRP) are enriched in basic and acidic residues. The stretch at 279-452 (ENRTDEPDSP…NRLLGEYKKE (174 aa)) forms a coiled coil. Over residues 597–623 (PRNQASSEYRASWPPNSTLPHSQSSPA) the composition is skewed to polar residues. The DIX domain maps to 600-680 (QASSEYRASW…HFKALDPEFG (81 aa)). Serine 618 carries the phosphoserine modification.

This sequence belongs to the DIXDC1 family. As to quaternary structure, may bind filamentous actin. Directly interacts (via DIX domain) with DVL2 (via DIX domain). Interacts with gamma-tubulin. Interacts with the complex composed of DVL2 and Rac. Interacts with AXIN1; competes with MAP3K1. Interacts with MAP3K4 preventing MAP3K4 interaction with AXIN1. Post-translationally, phosphorylated on tyrosine and serine residues. Polyubiquitinated, leading to its proteasomal degradation. WNT3A signaling increases DIXDC1 protein levels by inhibiting its ubiquitination and subsequent degradation. Abundantly expressed in brain and testis and to a lower extent in lung, kidney, colon, ovary and urinary bladder. Expressed in brain, liver, testis and spleen (at protein level). Expressed throughout the brain with strong expression in main and accessory olfactory bulbs, cerebral cortex, piriform cortex, hippocampus, habenular nucleus, dorsal thalamus, superior and inferior colliculi and cerebellum.

Its subcellular location is the cell junction. It is found in the focal adhesion. It localises to the cytoplasm. The protein localises to the cytoskeleton. The protein resides in the stress fiber. Its function is as follows. Positive effector of the Wnt signaling pathway; activates WNT3A signaling via DVL2. Regulates JNK activation by AXIN1 and DVL2. The chain is Dixin (Dixdc1) from Mus musculus (Mouse).